A 129-amino-acid chain; its full sequence is Serum amyloid A-1 protein (129 aa).

The signal sequence occupies residues Met-1–Ser-18. Positions Gln-19 to Ala-44 are important for amyloid formation. Residues Gly-92–Tyr-129 are disordered.

The protein belongs to the SAA family. In terms of assembly, homohexamer; dimer of trimers. Can form amyloid fibrils after partial proteolysis; the native, undenatured protein does not form amyloid fibrils (in vitro). Apolipoprotein of the HDL complex. Binds to heparin. Detected in liver.

Its subcellular location is the secreted. Its function is as follows. Major acute phase protein. This Neovison vison (American mink) protein is Serum amyloid A-1 protein (SAA1).